The following is a 315-amino-acid chain: Ribonuclease Z (315 aa).

Residues H61, H63, D65, H66, H151, D219, and H278 each contribute to the Zn(2+) site. The Proton acceptor role is filled by D65.

It belongs to the RNase Z family. In terms of assembly, homodimer. The cofactor is Zn(2+).

The catalysed reaction is Endonucleolytic cleavage of RNA, removing extra 3' nucleotides from tRNA precursor, generating 3' termini of tRNAs. A 3'-hydroxy group is left at the tRNA terminus and a 5'-phosphoryl group is left at the trailer molecule.. In terms of biological role, zinc phosphodiesterase, which displays some tRNA 3'-processing endonuclease activity. Probably involved in tRNA maturation, by removing a 3'-trailer from precursor tRNA. The protein is Ribonuclease Z of Clostridium botulinum (strain Eklund 17B / Type B).